The following is a 296-amino-acid chain: N-acetylmuramic acid 6-phosphate etherase (296 aa).

An SIS domain is found at 54 to 217 (VIASFQQGGR…STTAMVGIGK (164 aa)). The active-site Proton donor is the Glu-82. Glu-113 is an active-site residue.

The protein belongs to the GCKR-like family. MurNAc-6-P etherase subfamily. As to quaternary structure, homodimer.

It carries out the reaction N-acetyl-D-muramate 6-phosphate + H2O = N-acetyl-D-glucosamine 6-phosphate + (R)-lactate. It participates in amino-sugar metabolism; N-acetylmuramate degradation. In terms of biological role, specifically catalyzes the cleavage of the D-lactyl ether substituent of MurNAc 6-phosphate, producing GlcNAc 6-phosphate and D-lactate. The chain is N-acetylmuramic acid 6-phosphate etherase from Shouchella clausii (strain KSM-K16) (Alkalihalobacillus clausii).